A 1345-amino-acid polypeptide reads, in one-letter code: DNA-directed RNA polymerase subunit beta' (1345 aa).

Residues Cys60, Cys62, Cys75, and Cys78 each contribute to the Zn(2+) site. Mg(2+)-binding residues include Asp536, Asp538, and Asp540. Positions 895, 974, 981, and 984 each coordinate Zn(2+).

This sequence belongs to the RNA polymerase beta' chain family. In terms of assembly, the RNAP catalytic core consists of 2 alpha, 1 beta, 1 beta' and 1 omega subunit. When a sigma factor is associated with the core the holoenzyme is formed, which can initiate transcription. Mg(2+) is required as a cofactor. Zn(2+) serves as cofactor.

The enzyme catalyses RNA(n) + a ribonucleoside 5'-triphosphate = RNA(n+1) + diphosphate. Its function is as follows. DNA-dependent RNA polymerase catalyzes the transcription of DNA into RNA using the four ribonucleoside triphosphates as substrates. The protein is DNA-directed RNA polymerase subunit beta' of Bifidobacterium longum (strain DJO10A).